The following is a 322-amino-acid chain: Ferredoxin--NADP reductase (322 aa).

Residues aspartate 34, glutamine 42, tyrosine 47, valine 87, phenylalanine 120, aspartate 279, and threonine 320 each coordinate FAD.

The protein belongs to the ferredoxin--NADP reductase type 2 family. As to quaternary structure, homodimer. FAD is required as a cofactor.

The enzyme catalyses 2 reduced [2Fe-2S]-[ferredoxin] + NADP(+) + H(+) = 2 oxidized [2Fe-2S]-[ferredoxin] + NADPH. The chain is Ferredoxin--NADP reductase from Streptococcus sanguinis (strain SK36).